The following is a 199-amino-acid chain: MLVPIVVEQTGRGERSYDIYSRLLKDRIIFLGGPVDDHVANLVIAQMLFLEAEDPDKDIHLYINSPGGVVTSGMAIYDTMQYIKAPVSTICVGQAASMGALLLSGGEKGKRFSLKHSRIMIHQPLGGFQGQATDIHIHAQEILKLKKRLNEILAENTGQQLAKVEADTERDYFMSGAEAKDYGIIDNIIERNTPSGGTR.

Serine 97 serves as the catalytic Nucleophile. The active site involves histidine 122.

This sequence belongs to the peptidase S14 family. Fourteen ClpP subunits assemble into 2 heptameric rings which stack back to back to give a disk-like structure with a central cavity, resembling the structure of eukaryotic proteasomes.

The protein resides in the cytoplasm. It catalyses the reaction Hydrolysis of proteins to small peptides in the presence of ATP and magnesium. alpha-casein is the usual test substrate. In the absence of ATP, only oligopeptides shorter than five residues are hydrolyzed (such as succinyl-Leu-Tyr-|-NHMec, and Leu-Tyr-Leu-|-Tyr-Trp, in which cleavage of the -Tyr-|-Leu- and -Tyr-|-Trp bonds also occurs).. Its function is as follows. Cleaves peptides in various proteins in a process that requires ATP hydrolysis. Has a chymotrypsin-like activity. Plays a major role in the degradation of misfolded proteins. This chain is ATP-dependent Clp protease proteolytic subunit, found in Geobacter sulfurreducens (strain ATCC 51573 / DSM 12127 / PCA).